Here is a 216-residue protein sequence, read N- to C-terminus: TATA-box-binding protein-like 1 (216 aa).

2 repeat units span residues 38 to 121 (KPVI…QRLG) and 126 to 210 (FNHF…ILLQ).

Belongs to the TBP family.

The protein localises to the nucleus. TATA box-binding transcription factor. Members of the TBP family are differentially required to regulate transcription and development during early embryogenesis. This is TATA-box-binding protein-like 1 (trf1) from Entamoeba histolytica (strain ATCC 30459 / HM-1:IMSS / ABRM).